The chain runs to 256 residues: 5-keto-4-deoxy-D-glucarate aldolase (256 aa).

Residue H50 is the Proton acceptor of the active site. Q151 is a substrate binding site. Position 153 (E153) interacts with Mg(2+). Substrate contacts are provided by S178 and D179. D179 lines the Mg(2+) pocket.

Belongs to the HpcH/HpaI aldolase family. KDGluc aldolase subfamily. Homohexamer; trimer of dimers. Requires Mg(2+) as cofactor.

The enzyme catalyses 5-dehydro-4-deoxy-D-glucarate = 2-hydroxy-3-oxopropanoate + pyruvate. It carries out the reaction 2-dehydro-3-deoxy-D-glucarate = 2-hydroxy-3-oxopropanoate + pyruvate. Its pathway is carbohydrate acid metabolism; galactarate degradation; D-glycerate from galactarate: step 2/3. Catalyzes the reversible retro-aldol cleavage of both 5-keto-4-deoxy-D-glucarate and 2-keto-3-deoxy-D-glucarate to pyruvate and tartronic semialdehyde. In Salmonella arizonae (strain ATCC BAA-731 / CDC346-86 / RSK2980), this protein is 5-keto-4-deoxy-D-glucarate aldolase.